A 101-amino-acid chain; its full sequence is Small ribosomal subunit protein uS14 (101 aa).

The protein belongs to the universal ribosomal protein uS14 family. As to quaternary structure, part of the 30S ribosomal subunit. Contacts proteins S3 and S10.

Its function is as follows. Binds 16S rRNA, required for the assembly of 30S particles and may also be responsible for determining the conformation of the 16S rRNA at the A site. This Pseudoalteromonas atlantica (strain T6c / ATCC BAA-1087) protein is Small ribosomal subunit protein uS14.